We begin with the raw amino-acid sequence, 390 residues long: Succinate--CoA ligase [ADP-forming] subunit beta (390 aa).

An ATP-grasp domain is found at 9-248 (KEILRRHKAN…ITEEDPLEVQ (240 aa)). Residues K50, 57-59 (GRG), E103, I106, and E111 each bind ATP. Residues N203 and D217 each contribute to the Mg(2+) site. Residues N268 and 325–327 (GIV) contribute to the substrate site.

It belongs to the succinate/malate CoA ligase beta subunit family. As to quaternary structure, heterotetramer of two alpha and two beta subunits. It depends on Mg(2+) as a cofactor.

It carries out the reaction succinate + ATP + CoA = succinyl-CoA + ADP + phosphate. The enzyme catalyses GTP + succinate + CoA = succinyl-CoA + GDP + phosphate. It participates in carbohydrate metabolism; tricarboxylic acid cycle; succinate from succinyl-CoA (ligase route): step 1/1. Functionally, succinyl-CoA synthetase functions in the citric acid cycle (TCA), coupling the hydrolysis of succinyl-CoA to the synthesis of either ATP or GTP and thus represents the only step of substrate-level phosphorylation in the TCA. The beta subunit provides nucleotide specificity of the enzyme and binds the substrate succinate, while the binding sites for coenzyme A and phosphate are found in the alpha subunit. The sequence is that of Succinate--CoA ligase [ADP-forming] subunit beta from Leptospira interrogans serogroup Icterohaemorrhagiae serovar copenhageni (strain Fiocruz L1-130).